The primary structure comprises 627 residues: DNA mismatch repair protein MutL (627 aa).

Residues 376-404 (APASTNEVREGSAARAGNYQPPEPPSREA) are disordered.

Belongs to the DNA mismatch repair MutL/HexB family.

This protein is involved in the repair of mismatches in DNA. It is required for dam-dependent methyl-directed DNA mismatch repair. May act as a 'molecular matchmaker', a protein that promotes the formation of a stable complex between two or more DNA-binding proteins in an ATP-dependent manner without itself being part of a final effector complex. This Aeromonas salmonicida (strain A449) protein is DNA mismatch repair protein MutL.